Reading from the N-terminus, the 127-residue chain is Putative 2Fe-2S ferredoxin (127 aa).

C23, C54, and C58 together coordinate [2Fe-2S] cluster.

Belongs to the 2Fe2S Shethna-type ferredoxin family. [2Fe-2S] cluster is required as a cofactor.

In terms of biological role, ferredoxins are iron-sulfur proteins that transfer electrons in a wide variety of metabolic reactions. The protein is Putative 2Fe-2S ferredoxin (cbiW) of Priestia megaterium (Bacillus megaterium).